Consider the following 119-residue polypeptide: Bombesin (119 aa).

An N-terminal signal peptide occupies residues M1 to C29. Positions M30–L44 are excised as a propeptide. Position 58 is a methionine amide (M58). Positions S62–N119 are excised as a propeptide.

This sequence belongs to the bombesin/neuromedin-B/ranatensin family. As to expression, localized to the cutaneous granular glands in the skin and the brain.

It localises to the secreted. In terms of biological role, stimulates smooth muscle contraction. Role in induction of hypothermia, stimulation of DNA replication and release of many gastrointestinal hormones. The protein is Bombesin of Bombina orientalis (Oriental fire-bellied toad).